Reading from the N-terminus, the 602-residue chain is Aspartate--tRNA(Asp/Asn) ligase (602 aa).

Glu176 lines the L-aspartate pocket. Residues 200–203 form an aspartate region; the sequence is QQFK. Positions 222 and 452 each coordinate L-aspartate. 222–224 is a binding site for ATP; the sequence is RDE. Residue Glu490 participates in ATP binding. Residue Arg497 participates in L-aspartate binding. Position 542 to 545 (542 to 545) interacts with ATP; it reads GIDR.

Belongs to the class-II aminoacyl-tRNA synthetase family. Type 1 subfamily. In terms of assembly, homodimer.

The protein localises to the cytoplasm. It catalyses the reaction tRNA(Asx) + L-aspartate + ATP = L-aspartyl-tRNA(Asx) + AMP + diphosphate. Aspartyl-tRNA synthetase with relaxed tRNA specificity since it is able to aspartylate not only its cognate tRNA(Asp) but also tRNA(Asn). Reaction proceeds in two steps: L-aspartate is first activated by ATP to form Asp-AMP and then transferred to the acceptor end of tRNA(Asp/Asn). This chain is Aspartate--tRNA(Asp/Asn) ligase, found in Rickettsia akari (strain Hartford).